The primary structure comprises 91 residues: Large ribosomal subunit protein uL22 (91 aa).

Belongs to the universal ribosomal protein uL22 family. As to quaternary structure, part of the 50S ribosomal subunit.

Functionally, this protein binds specifically to 23S rRNA; its binding is stimulated by other ribosomal proteins, e.g. L4, L17, and L20. It is important during the early stages of 50S assembly. It makes multiple contacts with different domains of the 23S rRNA in the assembled 50S subunit and ribosome. Its function is as follows. The globular domain of the protein is located near the polypeptide exit tunnel on the outside of the subunit, while an extended beta-hairpin is found that lines the wall of the exit tunnel in the center of the 70S ribosome. This is Large ribosomal subunit protein uL22 (rplV) from Pigeon pea witches'-broom phytoplasma.